The sequence spans 98 residues: NADH-ubiquinone oxidoreductase chain 4L (98 aa).

The next 3 membrane-spanning stretches (helical) occupy residues Met-1–Leu-21, Ser-29–Leu-49, and Ile-61–Val-81.

It belongs to the complex I subunit 4L family. Core subunit of respiratory chain NADH dehydrogenase (Complex I) which is composed of 45 different subunits.

The protein resides in the mitochondrion inner membrane. The enzyme catalyses a ubiquinone + NADH + 5 H(+)(in) = a ubiquinol + NAD(+) + 4 H(+)(out). Core subunit of the mitochondrial membrane respiratory chain NADH dehydrogenase (Complex I) which catalyzes electron transfer from NADH through the respiratory chain, using ubiquinone as an electron acceptor. Part of the enzyme membrane arm which is embedded in the lipid bilayer and involved in proton translocation. This Platyrrhinus helleri (Heller's broad-nosed bat) protein is NADH-ubiquinone oxidoreductase chain 4L (MT-ND4L).